A 95-amino-acid polypeptide reads, in one-letter code: Ferredoxin-like protein FixX (95 aa).

It belongs to the bacterial-type ferredoxin family. FixX subfamily.

In terms of biological role, could be part of an electron transfer system required for anaerobic carnitine reduction. Could be a 3Fe-4S cluster-containing protein. This Shigella flexneri protein is Ferredoxin-like protein FixX (fixX).